We begin with the raw amino-acid sequence, 578 residues long: Galectin-3-binding protein (578 aa).

A signal peptide spans 1–18 (MAFLWLFSLWLLVPGTQG). The SRCR domain maps to 24–124 (MRLVNGASAN…HEKDAGVVCS (101 aa)). Intrachain disulfides connect Cys49–Cys113, Cys62–Cys123, and Cys93–Cys103. 2 N-linked (GlcNAc...) asparagine glycosylation sites follow: Asn69 and Asn102. The region spanning 153 to 221 (CDLFIQVTGQ…FYSRRIEVTM (69 aa)) is the BTB domain. In terms of domain architecture, BACK spans 260–360 (PLELYAYAQA…VLPQELFELQ (101 aa)). Asn362 and Asn398 each carry an N-linked (GlcNAc...) asparagine glycan.

Homodimers and homomultimers. The multimers form ring-like structures with a diameter of 30-40 nm. Binds LGALS1 and LGALS3. Binds ITGB1, COL4A1, COL5A1, COL6A1, FN1 and NID. The unglycosylated form interacts with PDE4DIP; this interaction, which is PDE4DIP isoform-specific, may connect a pericentrosomal complex to the gamma-tubulin ring complex (gamma-TuRC) to promote microtubule assembly and acetylation.

Its subcellular location is the secreted. It is found in the extracellular space. The protein localises to the extracellular matrix. In terms of biological role, promotes integrin-mediated cell adhesion. May stimulate host defense against viruses and tumor cells. The protein is Galectin-3-binding protein (LGALS3BP) of Mesocricetus auratus (Golden hamster).